A 51-amino-acid chain; its full sequence is DNA-directed RNA polymerases II, IV and V subunit 12 (51 aa).

Residues Cys-12, Cys-15, Cys-29, and Cys-32 each contribute to the Zn(2+) site.

This sequence belongs to the archaeal Rpo12/eukaryotic RPC10 RNA polymerase subunit family. As to quaternary structure, component of the RNA polymerase II, IV and V complexes. Associates with the mediator complex. Interacts with NRPD1.

Its subcellular location is the nucleus. In terms of biological role, DNA-dependent RNA polymerase catalyzes the transcription of DNA into RNA using the four ribonucleoside triphosphates as substrates. Component of RNA polymerase II which synthesizes mRNA precursors and many functional non-coding RNAs. Pol II is the central component of the basal RNA polymerase II transcription machinery. It is composed of mobile elements that move relative to each other. Component of RNA polymerases IV and V which mediate short-interfering RNAs (siRNA) accumulation and subsequent RNA-directed DNA methylation-dependent (RdDM) transcriptional gene silencing (TGS) of endogenous repeated sequences, including transposable elements. This Arabidopsis thaliana (Mouse-ear cress) protein is DNA-directed RNA polymerases II, IV and V subunit 12 (NRPB12).